The following is a 287-amino-acid chain: UBX domain-containing protein 1 (287 aa).

The UBA domain maps to 1-42; that stretch reads MAECSTLESLIEMGFSPSRAEKALAATGNQGIEPAMDWLVEH. The segment at 44–207 is disordered; it reads DDPDIDEPSV…VQEPPTKKEY (164 aa). Basic and acidic residues-rich tracts occupy residues 72-114 and 129-169; these read CEER…EQEK and KIQE…ERAR. Residues 72–164 adopt a coiled-coil conformation; the sequence is CEERLPLTEE…RVREKIARDK (93 aa). The segment covering 176-197 has biased composition (low complexity); the sequence is SEPISPPAEASIPATTPSPSSP. In terms of domain architecture, UBX spans 205–284; sequence KEYDQCRIQV…GLVPSAVLIV (80 aa).

The protein resides in the cytoplasm. Its function is as follows. Component of a complex required to couple deglycosylation and proteasome-mediated degradation of misfolded proteins in the endoplasmic reticulum that are retrotranslocated in the cytosol. Involved in ubiquitin-proteasome systems. This chain is UBX domain-containing protein 1 (ubxn1), found in Xenopus tropicalis (Western clawed frog).